The following is a 109-amino-acid chain: MTTHDRVRLQLQALEALLREHQHWRNDEPQPHQFNSTQPFFMDTMEPLEWLQWVLIPRMHDLLDNKQPLPGAFAVAPYYEMALATDHPQRALILAELEKLDALFADDAS.

The protein to the N-terminal of E.carotovora exoenzyme regulation regulon ORF1. The C-terminal part is colinear with YqcB. This sequence to H.influenzae HI_1436.

This is an uncharacterized protein from Escherichia coli (strain K12).